The chain runs to 91 residues: Large ribosomal subunit protein bL28 (91 aa).

A disordered region spans residues 1–23 (MSRVCELTGKGPMSGNNVSHANN).

It belongs to the bacterial ribosomal protein bL28 family.

The sequence is that of Large ribosomal subunit protein bL28 from Paracoccus denitrificans (strain Pd 1222).